The following is a 357-amino-acid chain: MKRKVLAMLVPALLVAGAANAAEIYNKDGNKVDFYGKMVGERIWSNTDDNNSENEDTSYARFGVKGESQITSELTGFGQFEYNLDASKPEGSNQEKTRLTFAGLKYNELGSFDYGRNYGVAYDAAAYTDMLVEWGGDSWASADNFMNGRTNGVATYRNSDFFGLVDGLNFAVQYQGKNSNRGVTKQNGDGYALSVDYNIEGFGFVGAYSKSDRTNEQAGDGYGDNAEVWSLAAKYDANNIYAAMMYGETRNMTVLANDHFANKTQNFEAVVQYQFDFGLRPSLGYVYSKGKDLYARDGHKGVDADRVNYIEVGTWYYFNKNMNVYTAYKFNLLDKDDAAITDAATDDQFAVGIVYQF.

An N-terminal signal peptide occupies residues 1–21; that stretch reads MKRKVLAMLVPALLVAGAANA.

The protein belongs to the Gram-negative porin family.

It is found in the cell outer membrane. Functionally, forms pores that allow passive diffusion of small molecules across the outer membrane. Plays a role in resistance to carbapenems; this carbapenem-resistant, noncarbapenemase-producing clinical isolate has a deletion in ompF and a mutated marR gene that does not induce expression of this protein. However if this gene is overexpressed, or if wild-type marR is introduced, this leads to decreased resistance to the carbapenem antibiotics ertapenem, imipenem and meropenem. This is Outer membrane protein YedS from Escherichia coli.